The following is a 579-amino-acid chain: MKTTTRQTGRYGAFTPVPLPGRTWPNNIIGSAPRWLSTDLRDGNQSLATPMSPDRKLAMFELLVSMGYKEIEVGFPVASQDDFDFLRVLIEQERIPEDVRISVLVQARDELIRRTVESLEGAPRATIHLYNATSPLFRRVVFGMSRNECKDLAVQGTRLMMKYAEKTLGDCDLGFQYSPELFSDTELDFSLEVCEAVMDVWQPEPGRGIILNFPTTVERSLPNVFADQIEWLSRNLSRREHVCLSIHPHNDRGTAVASAELALLAGAERIEGCLFGNGERAGNVCLVTLGLNMFTHGVDPGIDFSDINEIRRTVERCNGLAVHPRHPYGGDLVYTSFSGSHQDAIKKGFDALEREAAHRGAAVGDLPWEMPYLPLDPEDVGRTYEAVVRINSQSGKGGVAYVMSAWHGLNLPRDLQIDFAHVVQSQADAEGGEITPDRVKRLFEREYLSSSDLPVPLASGTELVTTSLHIDGERFDVGADRADTVQAVRATLTRWGFDVRAVHRTGIAGQDRGPDADVAVYAECRVEGRVSWGVGIDRDIEAASLAAVRSAVIRARLKRLPARGGEATGIVAPLVAAGR.

One can recognise a Pyruvate carboxyltransferase domain in the interval P33–N308. Mg(2+) is bound by residues D42, H247, H249, and N283. The tract at residues S450–R579 is regulatory domain.

It belongs to the alpha-IPM synthase/homocitrate synthase family. LeuA type 2 subfamily. As to quaternary structure, homodimer. Requires Mg(2+) as cofactor.

It localises to the cytoplasm. The enzyme catalyses 3-methyl-2-oxobutanoate + acetyl-CoA + H2O = (2S)-2-isopropylmalate + CoA + H(+). Its pathway is amino-acid biosynthesis; L-leucine biosynthesis; L-leucine from 3-methyl-2-oxobutanoate: step 1/4. Catalyzes the condensation of the acetyl group of acetyl-CoA with 3-methyl-2-oxobutanoate (2-ketoisovalerate) to form 3-carboxy-3-hydroxy-4-methylpentanoate (2-isopropylmalate). This Streptosporangium roseum (strain ATCC 12428 / DSM 43021 / JCM 3005 / KCTC 9067 / NCIMB 10171 / NRRL 2505 / NI 9100) protein is 2-isopropylmalate synthase.